The chain runs to 458 residues: Methylenetetrahydrofolate--tRNA-(uracil-5-)-methyltransferase TrmFO (458 aa).

Residue 11-16 (GGGMAG) participates in FAD binding.

It belongs to the MnmG family. TrmFO subfamily. FAD is required as a cofactor.

It is found in the cytoplasm. It carries out the reaction uridine(54) in tRNA + (6R)-5,10-methylene-5,6,7,8-tetrahydrofolate + NADH + H(+) = 5-methyluridine(54) in tRNA + (6S)-5,6,7,8-tetrahydrofolate + NAD(+). The catalysed reaction is uridine(54) in tRNA + (6R)-5,10-methylene-5,6,7,8-tetrahydrofolate + NADPH + H(+) = 5-methyluridine(54) in tRNA + (6S)-5,6,7,8-tetrahydrofolate + NADP(+). Its function is as follows. Catalyzes the folate-dependent formation of 5-methyl-uridine at position 54 (M-5-U54) in all tRNAs. This is Methylenetetrahydrofolate--tRNA-(uracil-5-)-methyltransferase TrmFO from Jannaschia sp. (strain CCS1).